Here is a 316-residue protein sequence, read N- to C-terminus: Ribose-phosphate pyrophosphokinase (316 aa).

ATP-binding positions include 40–42 (DGE) and 99–100 (RQ). His133 and Asp174 together coordinate Mg(2+). The active site involves Lys197. Residues Arg199, Asp223, and 227–231 (DTAGT) contribute to the D-ribose 5-phosphate site.

It belongs to the ribose-phosphate pyrophosphokinase family. Class I subfamily. In terms of assembly, homohexamer. It depends on Mg(2+) as a cofactor.

It localises to the cytoplasm. It carries out the reaction D-ribose 5-phosphate + ATP = 5-phospho-alpha-D-ribose 1-diphosphate + AMP + H(+). It functions in the pathway metabolic intermediate biosynthesis; 5-phospho-alpha-D-ribose 1-diphosphate biosynthesis; 5-phospho-alpha-D-ribose 1-diphosphate from D-ribose 5-phosphate (route I): step 1/1. Its function is as follows. Involved in the biosynthesis of the central metabolite phospho-alpha-D-ribosyl-1-pyrophosphate (PRPP) via the transfer of pyrophosphoryl group from ATP to 1-hydroxyl of ribose-5-phosphate (Rib-5-P). The chain is Ribose-phosphate pyrophosphokinase from Fusobacterium nucleatum subsp. nucleatum (strain ATCC 25586 / DSM 15643 / BCRC 10681 / CIP 101130 / JCM 8532 / KCTC 2640 / LMG 13131 / VPI 4355).